A 296-amino-acid polypeptide reads, in one-letter code: GTPase Era (296 aa).

The 168-residue stretch at 3–170 folds into the Era-type G domain; sequence KSGFVTIVGR…KELMFKYIPE (168 aa). The segment at 11-18 is G1; it reads GRPNVGKS. 11–18 contributes to the GTP binding site; that stretch reads GRPNVGKS. The tract at residues 37-41 is G2; the sequence is QTTRN. Positions 58–61 are G3; the sequence is DTPG. GTP contacts are provided by residues 58–62 and 120–123; these read DTPGI and NKID. The segment at 120–123 is G4; the sequence is NKID. Residues 149–151 are G5; the sequence is ISA. In terms of domain architecture, KH type-2 spans 201-278; the sequence is LSEEVPHGIA…YIRLWVKVKE (78 aa).

This sequence belongs to the TRAFAC class TrmE-Era-EngA-EngB-Septin-like GTPase superfamily. Era GTPase family. As to quaternary structure, monomer.

It is found in the cytoplasm. The protein resides in the cell membrane. In terms of biological role, an essential GTPase that binds both GDP and GTP, with rapid nucleotide exchange. Plays a role in 16S rRNA processing and 30S ribosomal subunit biogenesis and possibly also in cell cycle regulation and energy metabolism. The sequence is that of GTPase Era from Clostridium botulinum (strain Loch Maree / Type A3).